The primary structure comprises 590 residues: Aspartate--tRNA(Asp/Asn) ligase (590 aa).

E175 serves as a coordination point for L-aspartate. Residues 199–202 (QQYK) are aspartate. Positions 221 and 450 each coordinate L-aspartate. 221–223 (RDE) provides a ligand contact to ATP. E484 serves as a coordination point for ATP. Residue R491 coordinates L-aspartate. An ATP-binding site is contributed by 536 to 539 (GIDR).

It belongs to the class-II aminoacyl-tRNA synthetase family. Type 1 subfamily. Homodimer.

The protein localises to the cytoplasm. The enzyme catalyses tRNA(Asx) + L-aspartate + ATP = L-aspartyl-tRNA(Asx) + AMP + diphosphate. Aspartyl-tRNA synthetase with relaxed tRNA specificity since it is able to aspartylate not only its cognate tRNA(Asp) but also tRNA(Asn). Reaction proceeds in two steps: L-aspartate is first activated by ATP to form Asp-AMP and then transferred to the acceptor end of tRNA(Asp/Asn). This Azorhizobium caulinodans (strain ATCC 43989 / DSM 5975 / JCM 20966 / LMG 6465 / NBRC 14845 / NCIMB 13405 / ORS 571) protein is Aspartate--tRNA(Asp/Asn) ligase.